Reading from the N-terminus, the 488-residue chain is V-type proton ATPase subunit B 1 (488 aa).

This sequence belongs to the ATPase alpha/beta chains family. As to quaternary structure, V-ATPase is a heteromultimeric enzyme composed of a peripheral catalytic V1 complex (main components: subunits A, B, C, D, E, and F) attached to an integral membrane V0 proton pore complex (main component: the proteolipid protein).

Non-catalytic subunit of the peripheral V1 complex of vacuolar ATPase. V-ATPase is responsible for acidifying a variety of intracellular compartments in eukaryotic cells. In Hordeum vulgare (Barley), this protein is V-type proton ATPase subunit B 1.